Consider the following 252-residue polypeptide: Probable 6-phosphogluconolactonase 5 (252 aa).

It belongs to the glucosamine/galactosamine-6-phosphate isomerase family. 6-phosphogluconolactonase subfamily.

The protein localises to the cytoplasm. Its subcellular location is the cytosol. The catalysed reaction is 6-phospho-D-glucono-1,5-lactone + H2O = 6-phospho-D-gluconate + H(+). It participates in carbohydrate degradation; pentose phosphate pathway; D-ribulose 5-phosphate from D-glucose 6-phosphate (oxidative stage): step 2/3. Catalyzes the hydrolysis of 6-phosphogluconolactone to 6-phosphogluconate. In Arabidopsis thaliana (Mouse-ear cress), this protein is Probable 6-phosphogluconolactonase 5.